A 311-amino-acid chain; its full sequence is Aspartate carbamoyltransferase catalytic subunit (311 aa).

2 residues coordinate carbamoyl phosphate: Arg-55 and Thr-56. Residue Lys-85 participates in L-aspartate binding. Residues Arg-106, His-135, and Gln-138 each coordinate carbamoyl phosphate. L-aspartate contacts are provided by Arg-168 and Arg-230. 2 residues coordinate carbamoyl phosphate: Leu-268 and Pro-269.

The protein belongs to the aspartate/ornithine carbamoyltransferase superfamily. ATCase family. Heterododecamer (2C3:3R2) of six catalytic PyrB chains organized as two trimers (C3), and six regulatory PyrI chains organized as three dimers (R2).

The catalysed reaction is carbamoyl phosphate + L-aspartate = N-carbamoyl-L-aspartate + phosphate + H(+). It participates in pyrimidine metabolism; UMP biosynthesis via de novo pathway; (S)-dihydroorotate from bicarbonate: step 2/3. In terms of biological role, catalyzes the condensation of carbamoyl phosphate and aspartate to form carbamoyl aspartate and inorganic phosphate, the committed step in the de novo pyrimidine nucleotide biosynthesis pathway. The polypeptide is Aspartate carbamoyltransferase catalytic subunit (Salmonella arizonae (strain ATCC BAA-731 / CDC346-86 / RSK2980)).